We begin with the raw amino-acid sequence, 205 residues long: uncharacterized protein (205 aa).

A compositionally biased stretch (polar residues) spans 1 to 25 (MSNNNNEAQQPVESTNVESQQNVVQ). The disordered stretch occupies residues 1–205 (MSNNNNEAQQ…TSDPAQQVEA (205 aa)). Positions 32–79 (NENNDNNNNNNNNNNNNNNNNNNNNNNNNSNNNNNSSNNENNENNENN) are enriched in low complexity. The span at 80 to 122 (SCEKSEQEKPKEPEEPVQEEKSKEPCDQQKVKENEPAEEKETE) shows a compositional bias: basic and acidic residues. Composition is skewed to low complexity over residues 123-132 (PAAPVEPENP) and 146-162 (QHQQ…NGES). Residues 170–185 (SENKKRSIDEAGDIKD) show a composition bias toward basic and acidic residues. A compositionally biased stretch (polar residues) spans 194-205 (VETSDPAQQVEA).

This is an uncharacterized protein from Dictyostelium discoideum (Social amoeba).